The sequence spans 30 residues: Cyclotide cter-F (30 aa).

A cross-link (cyclopeptide (Gly-Asp)) is located at residues G1–D30. Intrachain disulfides connect C4–C20, C8–C22, and C13–C27.

Contains 3 disulfide bonds. In terms of processing, this is a cyclic peptide.

In terms of biological role, probably participates in a plant defense mechanism. The protein is Cyclotide cter-F of Clitoria ternatea (Butterfly pea).